Here is a 176-residue protein sequence, read N- to C-terminus: tRNA (adenine(37)-N6)-methyltransferase (176 aa).

One can recognise a TsaA-like domain in the interval 1–94 (SFSHIWVQFV…YLPFVEAQPD (94 aa)). S-adenosyl-L-methionine contacts are provided by residues H12, 12 to 13 (HG), R40, L50, and 74 to 77 (LDGT).

It belongs to the tRNA methyltransferase O family.

The catalysed reaction is N(6)-L-threonylcarbamoyladenosine(37) in tRNA + S-adenosyl-L-methionine = N(6)-methyl,N(6)-L-threonylcarbamoyladenosine(37) in tRNA + S-adenosyl-L-homocysteine + H(+). S-adenosyl-L-methionine-dependent methyltransferase responsible for the addition of the methyl group in the formation of N6-methyl-N6-threonylcarbamoyladenosine at position 37 (m(6)t(6)A37) of the tRNA anticodon loop of tRNA(Thr)(GGU). The methyl group of m(6)t(6)A37 appears to slightly improve the efficiency of the tRNA decoding ability. Binds to tRNA. The polypeptide is tRNA (adenine(37)-N6)-methyltransferase (Eikenella corrodens).